We begin with the raw amino-acid sequence, 332 residues long: MGKAAYHLPVMVREVVAWLVRRAGIYVDGTLGGGGHSLAILRALRDKGLEKGSFLIGIDQDSFAIAEAERTLASFRERTRLVQGNFREIADIVSTLRENQLRGMEVAGILLDLGVSSFQIDTSERGFSYLRSGPLDMRMEPDEGQSAADIVNTFEERELADIFFRFGEEKKSRRIASAICSWRNERGVIRGTQDLAAIVRSVVSVPDQQIKSLSRIFQALRIAVNDELGALESALKEGAASLSPQGRMAVMSYHSIEDRMVKHYFRTLAADDWGPKGVALREPLHKAAFTLVTRKALIAGDDEVNENSRARSAKMRVIERKMYSGEVSESDS.

Residues 34–36, Asp59, Phe86, Asp112, and Gln119 each bind S-adenosyl-L-methionine; that span reads GGH.

This sequence belongs to the methyltransferase superfamily. RsmH family.

Its subcellular location is the cytoplasm. It catalyses the reaction cytidine(1402) in 16S rRNA + S-adenosyl-L-methionine = N(4)-methylcytidine(1402) in 16S rRNA + S-adenosyl-L-homocysteine + H(+). In terms of biological role, specifically methylates the N4 position of cytidine in position 1402 (C1402) of 16S rRNA. The chain is Ribosomal RNA small subunit methyltransferase H from Chlorobium phaeobacteroides (strain BS1).